The sequence spans 209 residues: Potassium-transporting ATPase KdpC subunit (209 aa).

A helical transmembrane segment spans residues 18–38 (MLAVFTLFGLGLAYSLVATGI).

Belongs to the KdpC family. As to quaternary structure, the system is composed of three essential subunits: KdpA, KdpB and KdpC.

The protein localises to the cell inner membrane. Its function is as follows. Part of the high-affinity ATP-driven potassium transport (or Kdp) system, which catalyzes the hydrolysis of ATP coupled with the electrogenic transport of potassium into the cytoplasm. This subunit acts as a catalytic chaperone that increases the ATP-binding affinity of the ATP-hydrolyzing subunit KdpB by the formation of a transient KdpB/KdpC/ATP ternary complex. The sequence is that of Potassium-transporting ATPase KdpC subunit from Xanthomonas oryzae pv. oryzae (strain MAFF 311018).